Consider the following 695-residue polypeptide: Elongation factor G (695 aa).

Positions 9-283 (EKIRNIGIVA…AVIDYLPSPL (275 aa)) constitute a tr-type G domain. GTP-binding positions include 18 to 25 (AHIDAGKT), 82 to 86 (DTPGH), and 136 to 139 (NKMD).

It belongs to the TRAFAC class translation factor GTPase superfamily. Classic translation factor GTPase family. EF-G/EF-2 subfamily.

It is found in the cytoplasm. Functionally, catalyzes the GTP-dependent ribosomal translocation step during translation elongation. During this step, the ribosome changes from the pre-translocational (PRE) to the post-translocational (POST) state as the newly formed A-site-bound peptidyl-tRNA and P-site-bound deacylated tRNA move to the P and E sites, respectively. Catalyzes the coordinated movement of the two tRNA molecules, the mRNA and conformational changes in the ribosome. This is Elongation factor G from Petrotoga mobilis (strain DSM 10674 / SJ95).